The following is a 476-amino-acid chain: Glycogen synthase (476 aa).

K15 is a binding site for ADP-alpha-D-glucose.

The protein belongs to the glycosyltransferase 1 family. Bacterial/plant glycogen synthase subfamily.

It carries out the reaction [(1-&gt;4)-alpha-D-glucosyl](n) + ADP-alpha-D-glucose = [(1-&gt;4)-alpha-D-glucosyl](n+1) + ADP + H(+). The protein operates within glycan biosynthesis; glycogen biosynthesis. Functionally, synthesizes alpha-1,4-glucan chains using ADP-glucose. The sequence is that of Glycogen synthase from Yersinia pseudotuberculosis serotype IB (strain PB1/+).